Consider the following 61-residue polypeptide: Small ribosomal subunit protein uS14 (61 aa).

Zn(2+) contacts are provided by Cys24, Cys27, Cys40, and Cys43.

It belongs to the universal ribosomal protein uS14 family. Zinc-binding uS14 subfamily. Part of the 30S ribosomal subunit. Contacts proteins S3 and S10. It depends on Zn(2+) as a cofactor.

Functionally, binds 16S rRNA, required for the assembly of 30S particles and may also be responsible for determining the conformation of the 16S rRNA at the A site. This is Small ribosomal subunit protein uS14 from Roseiflexus castenholzii (strain DSM 13941 / HLO8).